A 123-amino-acid chain; its full sequence is Large ribosomal subunit protein bL12 (123 aa).

Belongs to the bacterial ribosomal protein bL12 family. As to quaternary structure, homodimer. Part of the ribosomal stalk of the 50S ribosomal subunit. Forms a multimeric L10(L12)X complex, where L10 forms an elongated spine to which 2 to 4 L12 dimers bind in a sequential fashion. Binds GTP-bound translation factors.

Forms part of the ribosomal stalk which helps the ribosome interact with GTP-bound translation factors. Is thus essential for accurate translation. The protein is Large ribosomal subunit protein bL12 of Hydrogenovibrio crunogenus (strain DSM 25203 / XCL-2) (Thiomicrospira crunogena).